A 226-amino-acid chain; its full sequence is ATP synthase F(0) complex subunit a (226 aa).

Helical transmembrane passes span F6–F26, W68–L88, Q97–F117, I138–V158, I164–I184, and I195–T215.

The protein belongs to the ATPase A chain family. As to quaternary structure, component of the ATP synthase complex composed at least of ATP5F1A/subunit alpha, ATP5F1B/subunit beta, ATP5MC1/subunit c (homooctomer), MT-ATP6/subunit a, MT-ATP8/subunit 8, ATP5ME/subunit e, ATP5MF/subunit f, ATP5MG/subunit g, ATP5MK/subunit k, ATP5MJ/subunit j, ATP5F1C/subunit gamma, ATP5F1D/subunit delta, ATP5F1E/subunit epsilon, ATP5PF/subunit F6, ATP5PB/subunit b, ATP5PD/subunit d, ATP5PO/subunit OSCP. ATP synthase complex consists of a soluble F(1) head domain (subunits alpha(3) and beta(3)) - the catalytic core - and a membrane F(0) domain - the membrane proton channel (subunits c, a, 8, e, f, g, k and j). These two domains are linked by a central stalk (subunits gamma, delta, and epsilon) rotating inside the F1 region and a stationary peripheral stalk (subunits F6, b, d, and OSCP). Interacts with DNAJC30; interaction is direct.

It localises to the mitochondrion inner membrane. It catalyses the reaction H(+)(in) = H(+)(out). In terms of biological role, subunit a, of the mitochondrial membrane ATP synthase complex (F(1)F(0) ATP synthase or Complex V) that produces ATP from ADP in the presence of a proton gradient across the membrane which is generated by electron transport complexes of the respiratory chain. ATP synthase complex consist of a soluble F(1) head domain - the catalytic core - and a membrane F(1) domain - the membrane proton channel. These two domains are linked by a central stalk rotating inside the F(1) region and a stationary peripheral stalk. During catalysis, ATP synthesis in the catalytic domain of F(1) is coupled via a rotary mechanism of the central stalk subunits to proton translocation. With the subunit c (ATP5MC1), forms the proton-conducting channel in the F(0) domain, that contains two crucial half-channels (inlet and outlet) that facilitate proton movement from the mitochondrial intermembrane space (IMS) into the matrix. Protons are taken up via the inlet half-channel and released through the outlet half-channel, following a Grotthuss mechanism. This is ATP synthase F(0) complex subunit a from Didelphis virginiana (North American opossum).